Here is a 315-residue protein sequence, read N- to C-terminus: Nucleotide-binding protein CGSHiEE_06315 (315 aa).

8–15 (GRSGAGKS) serves as a coordination point for ATP. 56–59 (DIRN) provides a ligand contact to GTP.

This sequence belongs to the RapZ-like family.

In terms of biological role, displays ATPase and GTPase activities. The polypeptide is Nucleotide-binding protein CGSHiEE_06315 (Haemophilus influenzae (strain PittEE)).